The following is a 447-amino-acid chain: tRNA modification GTPase MnmE (447 aa).

Residues R24, E81, and K120 each coordinate (6S)-5-formyl-5,6,7,8-tetrahydrofolate. In terms of domain architecture, TrmE-type G spans G216 to G371. N226 provides a ligand contact to K(+). GTP-binding positions include N226–S231, T245–T251, and D270–G273. S230 contacts Mg(2+). K(+)-binding residues include T245, I247, and T250. T251 lines the Mg(2+) pocket. K447 contacts (6S)-5-formyl-5,6,7,8-tetrahydrofolate.

This sequence belongs to the TRAFAC class TrmE-Era-EngA-EngB-Septin-like GTPase superfamily. TrmE GTPase family. As to quaternary structure, homodimer. Heterotetramer of two MnmE and two MnmG subunits. Requires K(+) as cofactor.

The protein resides in the cytoplasm. Its function is as follows. Exhibits a very high intrinsic GTPase hydrolysis rate. Involved in the addition of a carboxymethylaminomethyl (cmnm) group at the wobble position (U34) of certain tRNAs, forming tRNA-cmnm(5)s(2)U34. The sequence is that of tRNA modification GTPase MnmE from Vesicomyosocius okutanii subsp. Calyptogena okutanii (strain HA).